The primary structure comprises 302 residues: MQQLLNEILDEVRPLIGRGKVADYIPALAGVEPNQLGIAVYSRDGELFHAGDALRPFSIQSISKVFSLVQAIQHSGEDIWQRLGHEPSGQPFNSLVQLEFERGKPRNPFINAGALVICDINQSRFAAPAQSMRDFVRRLCGNPEVVSDSVVARSEYQHRSRNAAAAYLMKSFGNFHNDVEAVLFSYFHHCALRMSCVDLARAFCFLADKGFCKHSGEQVLNERQTKQVNAIMATSGLYDEAGNFAYRVGLPGKSGVGGGIIAVVPGRFTVCVWSPELNAAGNSLAGIAALEKLSERIGWSIF.

Positions 61, 111, 155, 162, 186, 238, and 256 each coordinate substrate.

Belongs to the glutaminase family. Homotetramer.

The enzyme catalyses L-glutamine + H2O = L-glutamate + NH4(+). The chain is Glutaminase from Pseudomonas aeruginosa (strain ATCC 15692 / DSM 22644 / CIP 104116 / JCM 14847 / LMG 12228 / 1C / PRS 101 / PAO1).